The following is a 298-amino-acid chain: Ribose-phosphate pyrophosphokinase (298 aa).

ATP is bound by residues 33–35 and 91–92; these read DGE and RQ. Positions 125 and 164 each coordinate Mg(2+). The active site involves K187. Positions 189 and 224 each coordinate D-ribose 5-phosphate.

The protein belongs to the ribose-phosphate pyrophosphokinase family. Class III (archaeal) subfamily. It depends on Mg(2+) as a cofactor.

It is found in the cytoplasm. The catalysed reaction is D-ribose 5-phosphate + ATP = 5-phospho-alpha-D-ribose 1-diphosphate + AMP + H(+). It participates in metabolic intermediate biosynthesis; 5-phospho-alpha-D-ribose 1-diphosphate biosynthesis; 5-phospho-alpha-D-ribose 1-diphosphate from D-ribose 5-phosphate (route I): step 1/1. Functionally, involved in the biosynthesis of the central metabolite phospho-alpha-D-ribosyl-1-pyrophosphate (PRPP) via the transfer of pyrophosphoryl group from ATP to 1-hydroxyl of ribose-5-phosphate (Rib-5-P). This is Ribose-phosphate pyrophosphokinase from Methanobrevibacter smithii (strain ATCC 35061 / DSM 861 / OCM 144 / PS).